An 819-amino-acid polypeptide reads, in one-letter code: Proteome of basal body protein 15 (819 aa).

Composition is skewed to low complexity over residues 46–59 (PASS…NPGR) and 572–581 (RQQQQQQQHT). Disordered stretches follow at residues 46–72 (PASS…LATG) and 564–590 (ERQR…GGGV). Residues 546 to 580 (YVVLREAVARVQARMEQQERQRRLLERQQQQQQQH) adopt a coiled-coil conformation.

The protein resides in the cytoplasm. The protein localises to the cytoskeleton. It localises to the microtubule organizing center. It is found in the centrosome. Its subcellular location is the centriole. The chain is Proteome of basal body protein 15 from Chlamydomonas reinhardtii (Chlamydomonas smithii).